The sequence spans 144 residues: Macromomycin (144 aa).

The first 32 residues, 1-32 (MLQNTSRFLARAGATVGVAAGLAFSLPADRDG), serve as a signal peptide directing secretion. Disulfide bonds link C68-C78 and C120-C125.

This sequence belongs to the neocarzinostatin family.

Functionally, binds non-covalently to a chromophore which is the cytotoxic and mutagenic component of the antibiotic. The chromophore binds to DNA as a weak intercalator and causes single- and double-strand breaks. The protein is Macromomycin of Streptomyces macromomyceticus.